A 622-amino-acid polypeptide reads, in one-letter code: Cilia- and flagella-associated protein 206 (622 aa).

This sequence belongs to the CFAP206 family.

The protein resides in the cytoplasm. The protein localises to the cytoskeleton. It is found in the cilium axoneme. Its subcellular location is the cilium basal body. Its function is as follows. Essential for sperm motility and is involved in the regulation of the beating frequency of motile cilia on the epithelial cells of the respiratory tract. Required for the establishment of radial spokes in sperm flagella. The polypeptide is Cilia- and flagella-associated protein 206 (Bos taurus (Bovine)).